Reading from the N-terminus, the 94-residue chain is MNIKPLGDRVVIKALPMEEKTKSGIIMPDTAKEKPQEGEVVAVGPGKMEKGERIVLDVKVGDRVIYSKYAGTEVKYDGQEYLILKETDILAVIG.

It belongs to the GroES chaperonin family. In terms of assembly, heptamer of 7 subunits arranged in a ring. Interacts with the chaperonin GroEL.

The protein localises to the cytoplasm. In terms of biological role, together with the chaperonin GroEL, plays an essential role in assisting protein folding. The GroEL-GroES system forms a nano-cage that allows encapsulation of the non-native substrate proteins and provides a physical environment optimized to promote and accelerate protein folding. GroES binds to the apical surface of the GroEL ring, thereby capping the opening of the GroEL channel. In Desulfitobacterium hafniense (strain DSM 10664 / DCB-2), this protein is Co-chaperonin GroES.